The chain runs to 661 residues: Threonine--tRNA ligase (661 aa).

The TGS domain occupies 1 to 64; the sequence is MSQAISLTFP…TTGRIEIITR (64 aa). Residues 245 to 546 are catalytic; sequence DHRRLGREMD…LIENFAGHMP (302 aa). Cysteine 341, histidine 392, and histidine 523 together coordinate Zn(2+).

This sequence belongs to the class-II aminoacyl-tRNA synthetase family. Homodimer. Requires Zn(2+) as cofactor.

The protein resides in the cytoplasm. The catalysed reaction is tRNA(Thr) + L-threonine + ATP = L-threonyl-tRNA(Thr) + AMP + diphosphate + H(+). In terms of biological role, catalyzes the attachment of threonine to tRNA(Thr) in a two-step reaction: L-threonine is first activated by ATP to form Thr-AMP and then transferred to the acceptor end of tRNA(Thr). Also edits incorrectly charged L-seryl-tRNA(Thr). This Rhizobium johnstonii (strain DSM 114642 / LMG 32736 / 3841) (Rhizobium leguminosarum bv. viciae) protein is Threonine--tRNA ligase.